The sequence spans 65 residues: VESP-VB1 (65 aa).

An N-terminal signal peptide occupies residues 1 to 23 (MKMSILFLFALIASLACLQLTFA). AXPX repeat units lie at residues 23–26 (AAPA), 27–30 (ASPL), 31–34 (ANPG), 35–38 (ASPE), 39–42 (AAPL), 43–46 (ADPL), and 47–50 (ADPF). Positions 24–49 (APAASPLANPGASPEAAPLADPLADP) are excised as a propeptide. L62 is modified (leucine amide).

In terms of tissue distribution, expressed by the venom gland.

The protein resides in the secreted. Functionally, antimicrobial peptide. Shows activity against both Gram-positive (S.aureus MIC=1.0-3.75 ug/ml) and -negative (E.coli MIC=7.5-15 ug/ml) bacteria, as well against fungi (C.albicans MIC=30 ug/ml). Also promotes important mast cell degranulation. Shows little hemolytic activity on rabbit and human erythrocytes. Its mast cell degranulation activity may be related to the activation of G-protein coupled receptors in mast cells as well as interaction with other proteins located in cell endosomal membranes in the mast cells. This Vespa bicolor (Black shield wasp) protein is VESP-VB1.